The primary structure comprises 196 residues: S-norcoclaurine synthase 2 (196 aa).

The signal sequence occupies residues 1–19 (MRMEVVLVVFLMFIGTINC). A dopamine-binding site is contributed by 104-106 (YRE). The Proton donor role is filled by Lys118. A (4-hydroxyphenyl)acetaldehyde-binding site is contributed by Asp137.

It belongs to the BetVI family.

It catalyses the reaction (4-hydroxyphenyl)acetaldehyde + dopamine = (S)-norcoclaurine + H2O. Its activity is regulated as follows. Not inhibited by O-phenanthroline or EDTA. Involved in the biosynthesis of the common precursor of all benzylisoquinoline alkaloids such as morphine, sanguinarine, codeine or berberine. Condenses dopamine and pyruvic acid or 4-hydroxyphenylpyruvate. In Coptis japonica (Japanese goldthread), this protein is S-norcoclaurine synthase 2 (PR10A).